A 622-amino-acid polypeptide reads, in one-letter code: Low affinity potassium transport system protein Kup (622 aa).

A run of 12 helical transmembrane segments spans residues 9-29 (LSAVTLAAIGVVYGDIGTSPL), 46-66 (PDVVFGFLSLIFWMLILVVSV), 101-121 (ILVVLGLIGGSFFYGEVVITP), 137-157 (PALDPYIVPCSIAVLTLLFVI), 165-185 (VGKLFAPVMLVWFLTLALLGL), 213-233 (VSFFALGAVVLAITGVEALYA), 247-267 (WFTVVLPSLVLNYFGQGALLL), 276-296 (PFFLLAPDWALIPLLILATLA), 337-357 (IYIPVINWTLYLAVVLVIIGF), 363-383 (LAAAYGIAVTGTMVITSILFC), 395-415 (FLVAFLLMVLLIIDIPMFSAN), and 416-436 (VLKLFSGGWLPLSLGLVMFII).

Belongs to the HAK/KUP transporter (TC 2.A.72) family.

Its subcellular location is the cell inner membrane. The enzyme catalyses K(+)(in) + H(+)(in) = K(+)(out) + H(+)(out). Functionally, responsible for the low-affinity transport of potassium into the cell. Likely operates as a K(+):H(+) symporter. This chain is Low affinity potassium transport system protein Kup, found in Yersinia pseudotuberculosis serotype O:1b (strain IP 31758).